Reading from the N-terminus, the 510-residue chain is Protein ERGIC-53 (510 aa).

An N-terminal signal peptide occupies residues 1-30; that stretch reads MAGSRQRGLRARVRPLFCALLLSLGRFVRG. At 31–477 the chain is on the lumenal side; it reads DGVGGDPAVA…ELPPFPSCLS (447 aa). In terms of domain architecture, L-type lectin-like spans 44 to 267; the sequence is RRFEYKYSFK…DVLSFLTFQL (224 aa). A carbohydrate is bound by residues Ser88 and Asp121. 3 residues coordinate Ca(2+): Asp152, Phe154, and Asn156. Asn156 and His178 together coordinate a carbohydrate. Ca(2+) is bound at residue Asp181. A disulfide bridge links Cys190 with Cys230. Residue 251–253 participates in a carbohydrate binding; sequence GGL. Ser425 is modified (phosphoserine). A helical membrane pass occupies residues 478-498; it reads TVHFIIFVVVQTVLFIGYIMY. The Cytoplasmic segment spans residues 499-510; the sequence is RSQQEAAAKKFF. Residues 499 to 510 form a mediates interaction with RAB3GAP1, RAB3GAP2 and UBXN6 region; it reads RSQQEAAAKKFF. Residues 509 to 510 carry the ER export motif motif; that stretch reads FF.

In terms of assembly, exists both as a covalent disulfide-linked homohexamer, and a complex of three disulfide-linked dimers non-covalently kept together. Interacts with MCFD2. May interact with TMEM115. Interacts with RAB3GAP1 and RAB3GAP2. Interacts with UBXN6. Interacts with SERPINA1/alpha1-antitrypsin. Interacts with BET1. Post-translationally, the N-terminal may be partly blocked. Ubiquitous.

It localises to the endoplasmic reticulum-Golgi intermediate compartment membrane. The protein resides in the golgi apparatus membrane. The protein localises to the endoplasmic reticulum membrane. Its function is as follows. Mannose-specific lectin. May recognize sugar residues of glycoproteins, glycolipids, or glycosylphosphatidyl inositol anchors and may be involved in the sorting or recycling of proteins, lipids, or both. The LMAN1-MCFD2 complex forms a specific cargo receptor for the ER-to-Golgi transport of selected proteins. This chain is Protein ERGIC-53 (LMAN1), found in Homo sapiens (Human).